We begin with the raw amino-acid sequence, 211 residues long: ATP phosphoribosyltransferase (211 aa).

Belongs to the ATP phosphoribosyltransferase family. Short subfamily. Heteromultimer composed of HisG and HisZ subunits.

Its subcellular location is the cytoplasm. The catalysed reaction is 1-(5-phospho-beta-D-ribosyl)-ATP + diphosphate = 5-phospho-alpha-D-ribose 1-diphosphate + ATP. It functions in the pathway amino-acid biosynthesis; L-histidine biosynthesis; L-histidine from 5-phospho-alpha-D-ribose 1-diphosphate: step 1/9. Catalyzes the condensation of ATP and 5-phosphoribose 1-diphosphate to form N'-(5'-phosphoribosyl)-ATP (PR-ATP). Has a crucial role in the pathway because the rate of histidine biosynthesis seems to be controlled primarily by regulation of HisG enzymatic activity. The chain is ATP phosphoribosyltransferase from Bacillus thuringiensis subsp. konkukian (strain 97-27).